The primary structure comprises 313 residues: Intracellular endo-alpha-(1-&gt;5)-L-arabinanase (313 aa).

Asp-27 (proton acceptor) is an active-site residue. Substrate-binding positions include Asp-27, Gly-105, 144-147 (NAID), and 164-166 (SFW). Glu-201 functions as the Proton donor in the catalytic mechanism. Position 271 (His-271) interacts with Ca(2+).

This sequence belongs to the glycosyl hydrolase 43 family. As to quaternary structure, monomer. Requires Ca(2+) as cofactor.

It is found in the cytoplasm. The catalysed reaction is Endohydrolysis of (1-&gt;5)-alpha-arabinofuranosidic linkages in (1-&gt;5)-arabinans.. It participates in glycan metabolism; L-arabinan degradation. Its function is as follows. Involved in the degradation of arabinan and is a key enzyme in the complete degradation of the plant cell wall. Catalyzes the cleavage of endo alpha-(1-&gt;5)-L-arabinofuranosyl residues in debranched arabinan. This is Intracellular endo-alpha-(1-&gt;5)-L-arabinanase (abn-ts) from Geobacillus thermodenitrificans.